The following is a 117-amino-acid chain: uncharacterized protein (117 aa).

Residues Met-1 to Gly-38 form the signal peptide.

The protein resides in the secreted. This is an uncharacterized protein from Homo sapiens (Human).